Reading from the N-terminus, the 195-residue chain is Probable chemoreceptor glutamine deamidase CheD 2 (195 aa).

Belongs to the CheD family.

The catalysed reaction is L-glutaminyl-[protein] + H2O = L-glutamyl-[protein] + NH4(+). In terms of biological role, probably deamidates glutamine residues to glutamate on methyl-accepting chemotaxis receptors (MCPs), playing an important role in chemotaxis. The protein is Probable chemoreceptor glutamine deamidase CheD 2 of Burkholderia thailandensis (strain ATCC 700388 / DSM 13276 / CCUG 48851 / CIP 106301 / E264).